A 114-amino-acid chain; its full sequence is uncharacterized protein (114 aa).

Residues 90 to 114 (VESSQKRKPEESTIGMDAPKKMKRG) form a disordered region.

This is an uncharacterized protein from Caenorhabditis elegans.